A 460-amino-acid polypeptide reads, in one-letter code: Hydroxyproline dehydrogenase (460 aa).

Residue K310 is modified to N6-acetyllysine.

Belongs to the proline oxidase family. FAD serves as cofactor.

The enzyme catalyses trans-4-hydroxy-L-proline + a quinone = (3R,5S)-1-pyrroline-3-hydroxy-5-carboxylate + a quinol + H(+). It carries out the reaction L-proline + a quinone = (S)-1-pyrroline-5-carboxylate + a quinol + H(+). With respect to regulation, hydroproxyproline dehydrogenase activity is inhibited by THFA,(1R,3R)3-OH-cyclopentane-COOH and 5-OH-1H-pyrazole-3-COOH. Dehydrogenase that converts trans-4-L-hydroxyproline to delta-1-pyrroline-3-hydroxy-5-carboxylate (Hyp) using ubiquinone-10 as the terminal electron acceptor. Can also use proline as a substrate but with a very much lower efficiency. Does not react with other diastereomers of Hyp: trans-4-D-hydroxyproline and cis-4-L-hydroxyproline. Ubiquininone analogs such as menadione, duroquinone and ubiquinone-1 react more efficiently than oxygen as the terminal electron acceptor during catalysis. This Homo sapiens (Human) protein is Hydroxyproline dehydrogenase.